Here is an 82-residue protein sequence, read N- to C-terminus: MAVVLRLQRVGKKQQPQYRIVAIEKKSAVGSEAKEVVGHYNPCNAKAADQIKLNQERYDYWVKVGAKASPTVAALAKKASAK.

This sequence belongs to the bacterial ribosomal protein bS16 family.

This is Small ribosomal subunit protein bS16 from Elusimicrobium minutum (strain Pei191).